Reading from the N-terminus, the 200-residue chain is Prostamide/prostaglandin F synthase (200 aa).

The protein belongs to the peroxiredoxin-like PRXL2 family. Prostamide/prostaglandin F synthase subfamily.

The protein localises to the cytoplasm. The protein resides in the cytosol. It catalyses the reaction prostaglandin H2 + [thioredoxin]-dithiol = prostaglandin F2alpha + [thioredoxin]-disulfide. The enzyme catalyses prostamide F2alpha + [thioredoxin]-disulfide = prostamide H2 + [thioredoxin]-dithiol. Catalyzes the reduction of prostaglandin-ethanolamide H(2) (prostamide H(2)) to prostamide F(2alpha) with NADPH as proton donor. Also able to reduce prostaglandin H(2) to prostaglandin F(2alpha). This chain is Prostamide/prostaglandin F synthase (prxl2b), found in Salmo salar (Atlantic salmon).